A 319-amino-acid chain; its full sequence is Ankyrin repeat domain-containing protein 1 (319 aa).

Positions 63 to 89 (EKEREAELKKKKLEQRSKLENLEDLEI) form a coiled coil. 5 ANK repeats span residues 152–181 (YKRTALHRACLEGHLAIVEKLIEAGAQIEF), 185–214 (LESTAIHWASRGGNLDVLKLLLNKGAKISA), 218–247 (LLSTALHVAVRTGHYECAEHLIACEADLNA), 251–280 (EGDTPLHDAVRLNRYKMIRLLITYGADLNV), and 284–315 (AGKTPMDLVLNWQNGTKAIFDSLKENSYKASR).

Interacts with TTN/titin and YBX1. In terms of tissue distribution, expressed in heart. In postnatal neonatal heart, it is expressed in an asymmetrical way; left ventricle favored towards right ventricle. Whether or not this could be correlated with a hypertrophic heart is still a matter of debate. Levels increase gradually from newborn to adult.

Its subcellular location is the nucleus. In terms of biological role, may play an important role in endothelial cell activation. May act as a nuclear transcription factor that negatively regulates the expression of cardiac genes. This Sus scrofa (Pig) protein is Ankyrin repeat domain-containing protein 1 (ANKRD1).